A 427-amino-acid chain; its full sequence is Enolase (427 aa).

Residue Gln-163 coordinates (2R)-2-phosphoglycerate. The Proton donor role is filled by Glu-205. Asp-242, Glu-285, and Asp-312 together coordinate Mg(2+). Positions 337, 366, 367, and 388 each coordinate (2R)-2-phosphoglycerate. Lys-337 serves as the catalytic Proton acceptor.

It belongs to the enolase family. Mg(2+) serves as cofactor.

It is found in the cytoplasm. The protein resides in the secreted. The protein localises to the cell surface. The enzyme catalyses (2R)-2-phosphoglycerate = phosphoenolpyruvate + H2O. It participates in carbohydrate degradation; glycolysis; pyruvate from D-glyceraldehyde 3-phosphate: step 4/5. In terms of biological role, catalyzes the reversible conversion of 2-phosphoglycerate (2-PG) into phosphoenolpyruvate (PEP). It is essential for the degradation of carbohydrates via glycolysis. The sequence is that of Enolase from Thiobacillus denitrificans (strain ATCC 25259 / T1).